The primary structure comprises 122 residues: Large ribosomal subunit protein uL14 (122 aa).

Belongs to the universal ribosomal protein uL14 family. As to quaternary structure, part of the 50S ribosomal subunit. Forms a cluster with proteins L3 and L19. In the 70S ribosome, L14 and L19 interact and together make contacts with the 16S rRNA in bridges B5 and B8.

Functionally, binds to 23S rRNA. Forms part of two intersubunit bridges in the 70S ribosome. The protein is Large ribosomal subunit protein uL14 of Rubrobacter xylanophilus (strain DSM 9941 / JCM 11954 / NBRC 16129 / PRD-1).